Reading from the N-terminus, the 142-residue chain is Large ribosomal subunit protein uL23 (142 aa).

This sequence belongs to the universal ribosomal protein uL23 family. As to quaternary structure, component of the large ribosomal subunit. Mature ribosomes consist of a small (40S) and a large (60S) subunit. The 40S subunit contains about 32 different proteins and 1 molecule of RNA (18S). The 60S subunit contains 45 different proteins and 3 molecules of RNA (25S, 5.8S and 5S).

It is found in the cytoplasm. In terms of biological role, component of the ribosome, a large ribonucleoprotein complex responsible for the synthesis of proteins in the cell. The small ribosomal subunit (SSU) binds messenger RNAs (mRNAs) and translates the encoded message by selecting cognate aminoacyl-transfer RNA (tRNA) molecules. The large subunit (LSU) contains the ribosomal catalytic site termed the peptidyl transferase center (PTC), which catalyzes the formation of peptide bonds, thereby polymerizing the amino acids delivered by tRNAs into a polypeptide chain. The nascent polypeptides leave the ribosome through a tunnel in the LSU and interact with protein factors that function in enzymatic processing, targeting, and the membrane insertion of nascent chains at the exit of the ribosomal tunnel. RPL25 is a major component of the universal docking site for these factors at the polypeptide exit tunnel. The chain is Large ribosomal subunit protein uL23 from Candida albicans (strain SC5314 / ATCC MYA-2876) (Yeast).